A 199-amino-acid polypeptide reads, in one-letter code: Large ribosomal subunit protein uL10 (199 aa).

It belongs to the universal ribosomal protein uL10 family. As to quaternary structure, part of the ribosomal stalk of the 50S ribosomal subunit. The N-terminus interacts with L11 and the large rRNA to form the base of the stalk. The C-terminus forms an elongated spine to which L12 dimers bind in a sequential fashion forming a multimeric L10(L12)X complex.

Its function is as follows. Forms part of the ribosomal stalk, playing a central role in the interaction of the ribosome with GTP-bound translation factors. This chain is Large ribosomal subunit protein uL10 (rplJ), found in Aquifex aeolicus (strain VF5).